The following is a 240-amino-acid chain: Uridylate kinase (240 aa).

13-16 (KLSG) is a binding site for ATP. The segment at 21–26 (GEKGFG) is involved in allosteric activation by GTP. Glycine 55 contributes to the UMP binding site. ATP contacts are provided by glycine 56 and arginine 60. UMP contacts are provided by residues aspartate 75 and 136–143 (IGNPYFST). Residues asparagine 164, tyrosine 170, and aspartate 173 each contribute to the ATP site.

It belongs to the UMP kinase family. Homohexamer.

The protein resides in the cytoplasm. It catalyses the reaction UMP + ATP = UDP + ADP. Its pathway is pyrimidine metabolism; CTP biosynthesis via de novo pathway; UDP from UMP (UMPK route): step 1/1. Allosterically activated by GTP. Inhibited by UTP. Its function is as follows. Catalyzes the reversible phosphorylation of UMP to UDP. In Staphylococcus aureus (strain USA300), this protein is Uridylate kinase.